A 299-amino-acid chain; its full sequence is Nucleoporin POM34 (299 aa).

The segment at 1–39 is disordered; that stretch reads MKIQAGQLGLDDNDVPGPLPDTDSKPSSQSQNDTPMFKL. Residues 25 to 34 are compositionally biased toward polar residues; the sequence is KPSSQSQNDT. 2 consecutive transmembrane segments (helical) span residues 64–84 and 133–153; these read IMTN…IKFF and LFHL…LSTV. The residue at position 270 (Ser270) is a Phosphoserine. Phosphothreonine is present on Thr273. Residues Ser292 and Ser294 each carry the phosphoserine modification.

Component of the nuclear pore complex (NPC). NPC constitutes the exclusive means of nucleocytoplasmic transport. NPCs allow the passive diffusion of ions and small molecules and the active, nuclear transport receptor-mediated bidirectional transport of macromolecules such as proteins, RNAs, ribonucleoparticles (RNPs), and ribosomal subunits across the nuclear envelope. Due to its 8-fold rotational symmetry, all subunits are present with 8 copies or multiples thereof.

Its subcellular location is the nucleus. It localises to the nuclear pore complex. The protein localises to the nucleus membrane. Functions as a component of the nuclear pore complex (NPC). NPC components, collectively referred to as nucleoporins (NUPs), can play the role of both NPC structural components and of docking or interaction partners for transiently associated nuclear transport factors. The protein is Nucleoporin POM34 (POM34) of Saccharomyces cerevisiae (strain ATCC 204508 / S288c) (Baker's yeast).